The following is an 85-amino-acid chain: Progonadoliberin-2 (85 aa).

The N-terminal stretch at 1–23 is a signal peptide; that stretch reads MCVSRLVLLFGLLLCVGAQLSNA. Gln24 is modified (pyrrolidone carboxylic acid). Glycine amide is present on Gly33.

It belongs to the GnRH family.

It is found in the secreted. Functionally, stimulates the secretion of gonadotropins. This is Progonadoliberin-2 (gnrh2) from Dicentrarchus labrax (European seabass).